We begin with the raw amino-acid sequence, 987 residues long: Ephrin type-B receptor 4 (987 aa).

Positions 1 to 15 (MELRVLLCWASLAAA) are cleaved as a signal peptide. The Extracellular segment spans residues 16–539 (LEETLLNTKL…ESEGWREQLA (524 aa)). Residues 17–202 (EETLLNTKLE…FYKKCAQLTV (186 aa)) form the Eph LBD domain. 2 disulfide bridges follow: Cys61-Cys184 and Cys97-Cys107. Asn203, Asn335, and Asn426 each carry an N-linked (GlcNAc...) asparagine glycan. 2 Fibronectin type-III domains span residues 323 to 432 (PPSA…TDRE) and 436 to 529 (AVSD…TQLD). Residues 540 to 560 (LIAGTAVVGVVLVLVVIVVAV) form a helical membrane-spanning segment. The Cytoplasmic portion of the chain corresponds to 561 to 987 (LCLRKQSNGR…GGTGGPAPQY (427 aa)). The 285-residue stretch at 615–899 (VKIEEVIGAG…ENGGASHPLL (285 aa)) folds into the Protein kinase domain. ATP-binding positions include 621–629 (IGAGEFGEV) and Lys647. The Proton acceptor role is filled by Asp740. Ser769, Ser770, Ser911, and Ser943 each carry phosphoserine. The SAM domain maps to 907-971 (SAFGSVGEWL…LASVQHMKSQ (65 aa)). Residues 965 to 987 (VQHMKSQAKPGTPGGTGGPAPQY) form a disordered region. Thr976 is subject to Phosphothreonine. A compositionally biased stretch (gly residues) spans 976–987 (TPGGTGGPAPQY). The short motif at 985 to 987 (PQY) is the PDZ-binding element. Residue Tyr987 is modified to Phosphotyrosine.

This sequence belongs to the protein kinase superfamily. Tyr protein kinase family. Ephrin receptor subfamily. In terms of assembly, heterotetramer upon binding of the ligand. The heterotetramer is composed of an ephrin dimer and a receptor dimer. Oligomerization is probably required to induce biological responses. Interacts with RASA1; the interaction depends on EPHB4 tyrosine-phosphorylation. In terms of processing, phosphorylated; autophosphorylation is stimulated by EFNB2. In terms of tissue distribution, abundantly expressed in placenta but also detected in kidney, liver, lung, pancreas, skeletal muscle and heart. Expressed in primitive and myeloid, but not lymphoid, hematopoietic cells. Also observed in cell lines derived from liver, breast, colon, lung, melanocyte and cervix.

The protein localises to the cell membrane. It catalyses the reaction L-tyrosyl-[protein] + ATP = O-phospho-L-tyrosyl-[protein] + ADP + H(+). Its function is as follows. Receptor tyrosine kinase which binds promiscuously transmembrane ephrin-B family ligands residing on adjacent cells, leading to contact-dependent bidirectional signaling into neighboring cells. The signaling pathway downstream of the receptor is referred to as forward signaling while the signaling pathway downstream of the ephrin ligand is referred to as reverse signaling. Together with its cognate ligand/functional ligand EFNB2 it is involved in the regulation of cell adhesion and migration, and plays a central role in heart morphogenesis, angiogenesis and blood vessel remodeling and permeability. EPHB4-mediated forward signaling controls cellular repulsion and segregation from EFNB2-expressing cells. This Homo sapiens (Human) protein is Ephrin type-B receptor 4 (EPHB4).